The sequence spans 655 residues: tRNA uridine 5-carboxymethylaminomethyl modification enzyme MnmG (655 aa).

13 to 18 (GGGHAG) contacts FAD. 281 to 295 (GPRYCPSVEDKINRF) contacts NAD(+).

The protein belongs to the MnmG family. As to quaternary structure, homodimer. Heterotetramer of two MnmE and two MnmG subunits. Requires FAD as cofactor.

The protein resides in the cytoplasm. Its function is as follows. NAD-binding protein involved in the addition of a carboxymethylaminomethyl (cmnm) group at the wobble position (U34) of certain tRNAs, forming tRNA-cmnm(5)s(2)U34. This is tRNA uridine 5-carboxymethylaminomethyl modification enzyme MnmG from Paracidovorax citrulli (strain AAC00-1) (Acidovorax citrulli).